The chain runs to 350 residues: Phosphotriesterase-related protein (350 aa).

Histidine 22, histidine 24, glutamate 169, histidine 201, histidine 230, and aspartate 298 together coordinate a divalent metal cation.

Belongs to the metallo-dependent hydrolases superfamily. Phosphotriesterase family. The cofactor is a divalent metal cation.

This Drosophila pseudoobscura pseudoobscura (Fruit fly) protein is Phosphotriesterase-related protein.